Consider the following 411-residue polypeptide: 1-deoxy-D-xylulose 5-phosphate reductoisomerase (411 aa).

The NADPH site is built by Thr-12, Gly-13, Ser-14, Ile-15, and Asn-127. Lys-128 provides a ligand contact to 1-deoxy-D-xylulose 5-phosphate. An NADPH-binding site is contributed by Glu-129. Residue Asp-153 coordinates Mn(2+). 1-deoxy-D-xylulose 5-phosphate contacts are provided by Ser-154, Glu-155, Ser-189, and His-212. Glu-155 contributes to the Mn(2+) binding site. Residue Gly-218 coordinates NADPH. 1-deoxy-D-xylulose 5-phosphate-binding residues include Ser-225, Asn-230, Lys-231, and Glu-234. Glu-234 serves as a coordination point for Mn(2+).

It belongs to the DXR family. Mg(2+) serves as cofactor. The cofactor is Mn(2+).

The catalysed reaction is 2-C-methyl-D-erythritol 4-phosphate + NADP(+) = 1-deoxy-D-xylulose 5-phosphate + NADPH + H(+). The protein operates within isoprenoid biosynthesis; isopentenyl diphosphate biosynthesis via DXP pathway; isopentenyl diphosphate from 1-deoxy-D-xylulose 5-phosphate: step 1/6. Catalyzes the NADPH-dependent rearrangement and reduction of 1-deoxy-D-xylulose-5-phosphate (DXP) to 2-C-methyl-D-erythritol 4-phosphate (MEP). This is 1-deoxy-D-xylulose 5-phosphate reductoisomerase from Colwellia psychrerythraea (strain 34H / ATCC BAA-681) (Vibrio psychroerythus).